The primary structure comprises 463 residues: DDB1- and CUL4-associated factor 12-like protein 1 (463 aa).

The tract at residues 1–35 (MAQQQTGSRKRKAPAVEADAESSPSQGLAAADGEG) is disordered. WD repeat units lie at residues 87–137 (LTER…PLLR), 138–184 (DSEA…SLDP), 185–252 (LCLG…DVEA), 253–297 (IPRA…ALSR), 298–341 (LLSI…QQNI), and 342–376 (RPLC…LFYD).

This sequence belongs to the WD repeat DCAF12 family.

This Homo sapiens (Human) protein is DDB1- and CUL4-associated factor 12-like protein 1 (DCAF12L1).